We begin with the raw amino-acid sequence, 832 residues long: Protein PPP4R3C (832 aa).

Positions 708-832 are disordered; that stretch reads RTQEGEAVMP…SPKKKPHLSS (125 aa). Basic and acidic residues-rich tracts occupy residues 725–735 and 749–765; these read FTETKRTHQEG and METKRNQEHEGKVDSPK. A compositionally biased stretch (low complexity) spans 769–779; sequence SGDFKFSSSYS. A compositionally biased stretch (acidic residues) spans 801 to 820; that stretch reads PDDEEEKEEDEEEKEEDKED.

This sequence belongs to the SMEK family.

In Homo sapiens (Human), this protein is Protein PPP4R3C.